Reading from the N-terminus, the 989-residue chain is MAPPMTLEQWLLWKKMSQAHQALENVTTLTEEQKQQVIIDIQHEDVVPTRMDKLKYLAYSCCATSTRVLCWIVLVCVLLLVVFISCFVTMSRIQWNKDIAVFGPVIDWNVSQQAVIQQIRAKRLARSIRVEHATETYVEVNMTSIPQGVLYVPHPEPIILKERILGLSQVMMINSENIANTANLTQETKVLLADMINEEMNDLANQMIDFEIPLGDPRDQKQYQHQKCFQEFAHCYLVKYKTTKGWPSSTVIADQCPLPGNHPTVQYAHQNIWDYYVPFEQIRPEGWNSKSYYEDARIGGFYIPKWLRNNSYTHVLFCSDQIYGKWYNIDLTAQERENLLVRKLINLAKGNSSQLKDRAMPAEWDKQGKADLFRQINTLDVCNRPEMVFLLNSSYYEFSLWEGDCGFTRQNVTQANSLCKDFYNNSKWQKLHPYSCRFWRYKQEKEETKCSNGEKKKCLYYPQWDTPEALYDFGFLAYLNSFPSPICIKNQTIREPEYKISSLYLECMNASDRHGIDSALLALKTFLNFTGQSVNEMPLARAFVGLTDPKFPPTYPNITRESSGCNNNKRKRRSVNNYERLRSMGYALTGAVQTLSQISDINDERLQHGVYLLRDHVVTLMEAALHDVSIMEGMLAIQHVHTHLNHLKTMLLMRKIDWTFIRSDWIQQQLQKTDDEMKLIRRTARSLVYYVTQTSSSPTATSWEIGIYYEIVIPKHIYLNNWQVINVGHLLESAGHLTHVKVKHPYEIINKECSDTQYLHLEECIREDYVICDIVQIVQPCGNATELSDCPVTALKVKTPYIQVSPLKNGSYLVLSSTKDCSIPAYVPSVVTVNETVKCFGVEFHKPLYAETKTSYEPQVPHLKLRLPHLTGIIASLQSLEIEVTSTQENIKDQIERAKAQLLRLDIHEGDFPDWLKQVASATRDVWPAAASFIQGVGNFLSNTAQGIFGSAVSLLFYAKPILIGIGVILLIALLFKIISWLPGKPKKN.

The interval 1 to 15 is involved in virion budding; sequence MAPPMTLEQWLLWKK. Topologically, residues 1–65 are cytoplasmic; it reads MAPPMTLEQW…YLAYSCCATS (65 aa). Glycyl lysine isopeptide (Lys-Gly) (interchain with G-Cter in ubiquitin) cross-links involve residues K14, K15, K34, and K53. A helical; Signal-anchor for type III membrane protein transmembrane segment spans residues 66–88; it reads TRVLCWIVLVCVLLLVVFISCFV. At 89–961 the chain is on the lumenal side; sequence TMSRIQWNKD…AVSLLFYAKP (873 aa). 12 N-linked (GlcNAc...) asparagine; by host glycosylation sites follow: N109, N141, N183, N309, N351, N392, N411, N424, N490, N509, N528, and N557. The tract at residues 577 to 599 is fusion peptide; sequence NYERLRSMGYALTGAVQTLSQIS. N-linked (GlcNAc...) asparagine; by host glycans are attached at residues N783, N809, and N834. Residues 962–982 form a helical membrane-spanning segment; that stretch reads ILIGIGVILLIALLFKIISWL. Topologically, residues 983 to 989 are cytoplasmic; the sequence is PGKPKKN. The Endoplasmic reticulum retention signal motif lies at 985-987; sequence KPK.

In terms of assembly, the mature envelope protein consists of a trimer of SU-TM heterodimers. The N-terminus of leader peptide specifically interacts with Gag protein. This specific interaction between Gag protein and Env glycoprotein may allow particle egress. Envelope glycoproteins are synthesized as an inactive precursor that is processed by host furin or a furin-like protease to yield a functional hetero-oligomeric complex. Post-translationally, the transmembrane protein and the surface protein are N-glycosylated. In terms of processing, mono- and polyubiquitinated leader peptide are found in viral particles. Ubiquitination may be involved in regulating the balance between viral and subviral particles release.

The protein localises to the host endoplasmic reticulum membrane. Its subcellular location is the virion membrane. Functionally, the surface protein (SU) attaches the virus to the host cell by binding to the cell receptor. This interaction triggers the refolding of transmembrane protein (TM) and is thought to activate its fusogenic potential by unmasking its fusion peptide. Its function is as follows. The transmembrane protein (TM) acts as a class I viral fusion protein. Under the current model, the protein has at least 3 conformational states: pre-fusion native state, pre-hairpin intermediate state, and post-fusion hairpin state. During viral and target cell membrane fusion, the coiled coil regions (heptad repeats) assume a trimer-of-hairpins structure, positioning the fusion peptide in close proximity to the C-terminal region of the ectodomain. The formation of this structure appears to drive apposition and subsequent fusion of viral and target cell membranes. Membranes fusion leads to delivery of the nucleocapsid into the cytoplasm. The leader peptide is a component of released, infectious virions and is required for particle budding. The sequence is that of Envelope glycoprotein gp130 (env) from Simian foamy virus type 1 (SFVmac).